A 186-amino-acid chain; its full sequence is Quinone reductase (186 aa).

Residues 13–20 (SLRKESYN), 80–83 (EYNR), and Ser116 contribute to the FMN site.

It belongs to the SsuE family. In terms of assembly, homotetramer. Dimer of dimers. The tetrameric configuration has a central role in chromate reductase activity. Requires FMN as cofactor.

It catalyses the reaction a quinone + NADH + H(+) = a quinol + NAD(+). It carries out the reaction a quinone + NADPH + H(+) = a quinol + NADP(+). The enzyme catalyses Cr(6+) + 2 NADH + O2 = Cr(3+) + superoxide + 2 NAD(+) + 2 H(+). The catalysed reaction is Cr(6+) + 2 NADPH + O2 = Cr(3+) + superoxide + 2 NADP(+) + 2 H(+). With respect to regulation, may be inhibited by divalent cations. Functionally, catalyzes the reduction of quinones. Acts by simultaneous two-electron transfer, avoiding formation of highly reactive semiquinone intermediates and producing quinols that promote tolerance of H(2)O(2). Quinone reduction is probably the primary biological role of ChrR. Can also reduce toxic chromate to insoluble and less toxic Cr(3+). Catalyzes the transfer of three electrons to Cr(6+) producing Cr(3+) and one electron to molecular oxygen. This reaction produces transiently a minimal amount of the toxic Cr(5+) species and reactive oxygen species (ROS). Chromate reduction protects the cell against chromate toxicity, but is likely a secondary activity. Can also reduce potassium ferricyanide and 2,6-dichloroindophenol. During chromate reduction, displays an eightfold preference for NADH over NADPH. The chain is Quinone reductase from Pseudomonas putida (strain ATCC 47054 / DSM 6125 / CFBP 8728 / NCIMB 11950 / KT2440).